A 330-amino-acid polypeptide reads, in one-letter code: Aspartate--ammonia ligase (330 aa).

This sequence belongs to the class-II aminoacyl-tRNA synthetase family. AsnA subfamily.

The protein localises to the cytoplasm. It catalyses the reaction L-aspartate + NH4(+) + ATP = L-asparagine + AMP + diphosphate + H(+). The protein operates within amino-acid biosynthesis; L-asparagine biosynthesis; L-asparagine from L-aspartate (ammonia route): step 1/1. This Escherichia coli (strain SMS-3-5 / SECEC) protein is Aspartate--ammonia ligase.